Consider the following 140-residue polypeptide: Cysteine desulfuration protein SufE (140 aa).

Residue cysteine 51 is the Cysteine persulfide intermediate of the active site.

It belongs to the SufE family. In terms of assembly, homodimer. Interacts with SufS.

The protein resides in the cytoplasm. It functions in the pathway cofactor biosynthesis; iron-sulfur cluster biosynthesis. In terms of biological role, participates in cysteine desulfuration mediated by SufS. Cysteine desulfuration mobilizes sulfur from L-cysteine to yield L-alanine and constitutes an essential step in sulfur metabolism for biosynthesis of a variety of sulfur-containing biomolecules. Functions as a sulfur acceptor for SufS, by mediating the direct transfer of the sulfur atom from the S-sulfanylcysteine of SufS, an intermediate product of cysteine desulfuration process. The chain is Cysteine desulfuration protein SufE from Yersinia enterocolitica serotype O:8 / biotype 1B (strain NCTC 13174 / 8081).